Here is a 153-residue protein sequence, read N- to C-terminus: Small ribosomal subunit protein bS6 (153 aa).

Residues 94–153 (EAHEEGPSAMMQKRDRDDRPRRDGDRPDRGDRGDRGDRGPREGGRESFGDRPRRPREDRA) are disordered.

This sequence belongs to the bacterial ribosomal protein bS6 family.

Binds together with bS18 to 16S ribosomal RNA. This chain is Small ribosomal subunit protein bS6, found in Allorhizobium ampelinum (strain ATCC BAA-846 / DSM 112012 / S4) (Agrobacterium vitis (strain S4)).